The following is a 588-amino-acid chain: DNA mismatch repair protein MutL (588 aa).

It belongs to the DNA mismatch repair MutL/HexB family.

This protein is involved in the repair of mismatches in DNA. It is required for dam-dependent methyl-directed DNA mismatch repair. May act as a 'molecular matchmaker', a protein that promotes the formation of a stable complex between two or more DNA-binding proteins in an ATP-dependent manner without itself being part of a final effector complex. The polypeptide is DNA mismatch repair protein MutL (Methanocorpusculum labreanum (strain ATCC 43576 / DSM 4855 / Z)).